A 155-amino-acid polypeptide reads, in one-letter code: Small ribosomal subunit protein uS7c (155 aa).

The protein belongs to the universal ribosomal protein uS7 family. As to quaternary structure, part of the 30S ribosomal subunit.

It is found in the plastid. Its subcellular location is the chloroplast. Its function is as follows. One of the primary rRNA binding proteins, it binds directly to 16S rRNA where it nucleates assembly of the head domain of the 30S subunit. The chain is Small ribosomal subunit protein uS7c (rps7) from Lilium superbum (Turk's cap lily).